The primary structure comprises 86 residues: Putative antitoxin VapB36 (86 aa).

Possibly the antitoxin component of a type II toxin-antitoxin (TA) system. Its cognate toxin is VapC36 (Potential). In Mycobacterium tuberculosis (strain CDC 1551 / Oshkosh), this protein is Putative antitoxin VapB36 (vapB36).